A 735-amino-acid polypeptide reads, in one-letter code: Protein RETICULATA-RELATED 5, chloroplastic (735 aa).

The transit peptide at 1 to 75 (MKPTTNGGLL…TRRAILVAPP (75 aa)) directs the protein to the chloroplast. A run of 2 helical transmembrane segments spans residues 519-539 (ASVV…FISY) and 582-602 (VIIG…AAVG). Positions 714–726 (ASQSTVEYSTTEE) are enriched in polar residues. The disordered stretch occupies residues 714-735 (ASQSTVEYSTTEEASMDDLKNQ).

It belongs to the RETICULATA family.

Its subcellular location is the plastid. The protein resides in the chloroplast membrane. Functionally, may play a role in leaf development. The chain is Protein RETICULATA-RELATED 5, chloroplastic from Arabidopsis thaliana (Mouse-ear cress).